The sequence spans 154 residues: Endoribonuclease YbeY (154 aa).

Residues His-113, His-117, and His-123 each contribute to the Zn(2+) site.

The protein belongs to the endoribonuclease YbeY family. Requires Zn(2+) as cofactor.

It is found in the cytoplasm. In terms of biological role, single strand-specific metallo-endoribonuclease involved in late-stage 70S ribosome quality control and in maturation of the 3' terminus of the 16S rRNA. The polypeptide is Endoribonuclease YbeY (Vibrio vulnificus (strain YJ016)).